The primary structure comprises 212 residues: Elongation factor Ts (212 aa).

The tract at residues 82–85 is involved in Mg(2+) ion dislocation from EF-Tu; that stretch reads SDFV.

The protein belongs to the EF-Ts family.

It is found in the cytoplasm. Associates with the EF-Tu.GDP complex and induces the exchange of GDP to GTP. It remains bound to the aminoacyl-tRNA.EF-Tu.GTP complex up to the GTP hydrolysis stage on the ribosome. This Solibacter usitatus (strain Ellin6076) protein is Elongation factor Ts.